We begin with the raw amino-acid sequence, 134 residues long: Orexigenic neuropeptide QRFP (134 aa).

The N-terminal stretch at 1–18 is a signal peptide; the sequence is MRSPYSLPYLLFLPLGAC. A propeptide spanning residues 19-88 is cleaved from the precursor; that stretch reads FPVLDTEEPV…RAGFQLRLGR (70 aa). Residue Phe-131 is modified to Phenylalanine amide.

This sequence belongs to the RFamide neuropeptide family. Ligand for the G-protein coupled receptor QRFPR/GPR103. As to expression, expressed in the hypothalamus.

Its subcellular location is the secreted. Functionally, stimulates feeding behavior, metabolic rate and locomotor activity and increases blood pressure. May have orexigenic activity. May promote aldosterone secretion by the adrenal gland. This is Orexigenic neuropeptide QRFP from Bos taurus (Bovine).